The following is a 479-amino-acid chain: Aspartyl/glutamyl-tRNA(Asn/Gln) amidotransferase subunit B (479 aa).

Belongs to the GatB/GatE family. GatB subfamily. As to quaternary structure, heterotrimer of A, B and C subunits.

The enzyme catalyses L-glutamyl-tRNA(Gln) + L-glutamine + ATP + H2O = L-glutaminyl-tRNA(Gln) + L-glutamate + ADP + phosphate + H(+). It catalyses the reaction L-aspartyl-tRNA(Asn) + L-glutamine + ATP + H2O = L-asparaginyl-tRNA(Asn) + L-glutamate + ADP + phosphate + 2 H(+). Functionally, allows the formation of correctly charged Asn-tRNA(Asn) or Gln-tRNA(Gln) through the transamidation of misacylated Asp-tRNA(Asn) or Glu-tRNA(Gln) in organisms which lack either or both of asparaginyl-tRNA or glutaminyl-tRNA synthetases. The reaction takes place in the presence of glutamine and ATP through an activated phospho-Asp-tRNA(Asn) or phospho-Glu-tRNA(Gln). The chain is Aspartyl/glutamyl-tRNA(Asn/Gln) amidotransferase subunit B from Streptococcus pyogenes serotype M6 (strain ATCC BAA-946 / MGAS10394).